The following is a 624-amino-acid chain: Phosphoenolpyruvate carboxykinase [GTP] (624 aa).

Substrate-binding positions include R88 and 222-224 (YGG). The Mn(2+) site is built by K231 and H250. S272 lines the substrate pocket. 273–278 (MCGKTS) provides a ligand contact to GTP. C274 is an active-site residue. Mn(2+) is bound at residue D291. 386–388 (NAR) is a binding site for substrate. Residues R388 and R420 each coordinate GTP.

It belongs to the phosphoenolpyruvate carboxykinase [GTP] family. Mn(2+) serves as cofactor.

The protein resides in the cytoplasm. It carries out the reaction oxaloacetate + GTP = phosphoenolpyruvate + GDP + CO2. It participates in carbohydrate biosynthesis; gluconeogenesis. In terms of biological role, catalyzes the conversion of oxaloacetate (OAA) to phosphoenolpyruvate (PEP), the rate-limiting step in the metabolic pathway that produces glucose from lactate and other precursors derived from the citric acid cycle. The polypeptide is Phosphoenolpyruvate carboxykinase [GTP] (Pyrococcus furiosus (strain ATCC 43587 / DSM 3638 / JCM 8422 / Vc1)).